We begin with the raw amino-acid sequence, 448 residues long: Bifunctional protein GlmU (448 aa).

Positions 1–230 (MRSCLSIVLA…FDNIVGINNC (230 aa)) are pyrophosphorylase. Residues 9-12 (LAAG), Lys23, Gln76, and 81-82 (GT) each bind UDP-N-acetyl-alpha-D-glucosamine. Asp106 is a binding site for Mg(2+). Gly142, Glu156, Asn171, and Asn228 together coordinate UDP-N-acetyl-alpha-D-glucosamine. Asn228 is a Mg(2+) binding site. A linker region spans residues 231–251 (FELFEADSLWQKRKARDLMLS). Residues 252 to 448 (GVTILKPETV…VRLSGNQQKK (197 aa)) form an N-acetyltransferase region. UDP-N-acetyl-alpha-D-glucosamine-binding residues include Arg317 and Lys335. Catalysis depends on His347, which acts as the Proton acceptor. Tyr350 and Asn361 together coordinate UDP-N-acetyl-alpha-D-glucosamine. Residues Ala364, 370-371 (NY), Ser389, Ser407, and Arg424 each bind acetyl-CoA.

This sequence in the N-terminal section; belongs to the N-acetylglucosamine-1-phosphate uridyltransferase family. In the C-terminal section; belongs to the transferase hexapeptide repeat family. Homotrimer. Mg(2+) is required as a cofactor.

It is found in the cytoplasm. It carries out the reaction alpha-D-glucosamine 1-phosphate + acetyl-CoA = N-acetyl-alpha-D-glucosamine 1-phosphate + CoA + H(+). It catalyses the reaction N-acetyl-alpha-D-glucosamine 1-phosphate + UTP + H(+) = UDP-N-acetyl-alpha-D-glucosamine + diphosphate. Its pathway is nucleotide-sugar biosynthesis; UDP-N-acetyl-alpha-D-glucosamine biosynthesis; N-acetyl-alpha-D-glucosamine 1-phosphate from alpha-D-glucosamine 6-phosphate (route II): step 2/2. It functions in the pathway nucleotide-sugar biosynthesis; UDP-N-acetyl-alpha-D-glucosamine biosynthesis; UDP-N-acetyl-alpha-D-glucosamine from N-acetyl-alpha-D-glucosamine 1-phosphate: step 1/1. It participates in bacterial outer membrane biogenesis; LPS lipid A biosynthesis. In terms of biological role, catalyzes the last two sequential reactions in the de novo biosynthetic pathway for UDP-N-acetylglucosamine (UDP-GlcNAc). The C-terminal domain catalyzes the transfer of acetyl group from acetyl coenzyme A to glucosamine-1-phosphate (GlcN-1-P) to produce N-acetylglucosamine-1-phosphate (GlcNAc-1-P), which is converted into UDP-GlcNAc by the transfer of uridine 5-monophosphate (from uridine 5-triphosphate), a reaction catalyzed by the N-terminal domain. This is Bifunctional protein GlmU from Bartonella quintana (strain Toulouse) (Rochalimaea quintana).